The following is a 479-amino-acid chain: Aspartyl/glutamyl-tRNA(Asn/Gln) amidotransferase subunit B (479 aa).

It belongs to the GatB/GatE family. GatB subfamily. As to quaternary structure, heterotrimer of A, B and C subunits.

The catalysed reaction is L-glutamyl-tRNA(Gln) + L-glutamine + ATP + H2O = L-glutaminyl-tRNA(Gln) + L-glutamate + ADP + phosphate + H(+). The enzyme catalyses L-aspartyl-tRNA(Asn) + L-glutamine + ATP + H2O = L-asparaginyl-tRNA(Asn) + L-glutamate + ADP + phosphate + 2 H(+). Its function is as follows. Allows the formation of correctly charged Asn-tRNA(Asn) or Gln-tRNA(Gln) through the transamidation of misacylated Asp-tRNA(Asn) or Glu-tRNA(Gln) in organisms which lack either or both of asparaginyl-tRNA or glutaminyl-tRNA synthetases. The reaction takes place in the presence of glutamine and ATP through an activated phospho-Asp-tRNA(Asn) or phospho-Glu-tRNA(Gln). This is Aspartyl/glutamyl-tRNA(Asn/Gln) amidotransferase subunit B from Clostridium beijerinckii (strain ATCC 51743 / NCIMB 8052) (Clostridium acetobutylicum).